The chain runs to 459 residues: Ribulose bisphosphate carboxylase large chain (459 aa).

Lys4 carries the post-translational modification N6,N6,N6-trimethyllysine. Residues Asn113 and Thr163 each coordinate substrate. The active-site Proton acceptor is the Lys165. Lys167 is a binding site for substrate. Mg(2+) is bound by residues Lys191, Asp193, and Glu194. The residue at position 191 (Lys191) is an N6-carboxylysine. Residue His284 is the Proton acceptor of the active site. Substrate contacts are provided by Arg285, His317, and Ser369.

This sequence belongs to the RuBisCO large chain family. Type I subfamily. In terms of assembly, heterohexadecamer of 8 large chains and 8 small chains; disulfide-linked. The disulfide link is formed within the large subunit homodimers. Requires Mg(2+) as cofactor. In terms of processing, the disulfide bond which can form in the large chain dimeric partners within the hexadecamer appears to be associated with oxidative stress and protein turnover.

It is found in the plastid. Its subcellular location is the chloroplast. It catalyses the reaction 2 (2R)-3-phosphoglycerate + 2 H(+) = D-ribulose 1,5-bisphosphate + CO2 + H2O. The catalysed reaction is D-ribulose 1,5-bisphosphate + O2 = 2-phosphoglycolate + (2R)-3-phosphoglycerate + 2 H(+). Functionally, ruBisCO catalyzes two reactions: the carboxylation of D-ribulose 1,5-bisphosphate, the primary event in carbon dioxide fixation, as well as the oxidative fragmentation of the pentose substrate in the photorespiration process. Both reactions occur simultaneously and in competition at the same active site. The sequence is that of Ribulose bisphosphate carboxylase large chain from Nyssa ogeche (Ogeechee tupelo).